The sequence spans 256 residues: Probable enoyl-CoA hydratase echA14 (256 aa).

Residues 235 to 256 (GPQAKSVQSPEFAARLAAAQHR) form a disordered region.

Belongs to the enoyl-CoA hydratase/isomerase family.

The catalysed reaction is a (3S)-3-hydroxyacyl-CoA = a (2E)-enoyl-CoA + H2O. The enzyme catalyses a 4-saturated-(3S)-3-hydroxyacyl-CoA = a (3E)-enoyl-CoA + H2O. In terms of biological role, could possibly oxidize fatty acids using specific components. In Mycobacterium tuberculosis (strain CDC 1551 / Oshkosh), this protein is Probable enoyl-CoA hydratase echA14 (echA14).